Consider the following 650-residue polypeptide: Vitrin (650 aa).

Positions 1–26 (MGIVVPTMKASVIEVLLVLLVTGIHS) are cleaved as a signal peptide. The LCCL domain occupies 40-133 (TVPQINCDVK…LSLPRWRESF (94 aa)). Cystine bridges form between Cys-46/Cys-62 and Cys-66/Cys-86. A disordered region spans residues 198-226 (RSTSKPFAASVTNSPRPQPVGHRSQEMEE). VWFA domains lie at 265–450 (DLSF…VKRV) and 467–640 (DIGF…IQNI). Asn-492 carries an N-linked (GlcNAc...) asparagine glycan.

In terms of assembly, binds dermatan sulfate and chondroitin sulfate.

It is found in the secreted. It localises to the extracellular space. Its subcellular location is the extracellular matrix. Promotes matrix assembly and cell adhesiveness. Plays a role in spinal cord formation by regulating the proliferation and differentiation of neural stem cells. The chain is Vitrin (Vit) from Mus musculus (Mouse).